We begin with the raw amino-acid sequence, 240 residues long: Octanoyltransferase (240 aa).

The BPL/LPL catalytic domain maps to 49–233 (GEAPELVWLL…AFESVFGATR (185 aa)). Residues 87–94 (RGGQVTYH), 162–164 (AIG), and 175–177 (GIA) contribute to the substrate site. Cysteine 193 acts as the Acyl-thioester intermediate in catalysis.

It belongs to the LipB family.

It is found in the cytoplasm. It carries out the reaction octanoyl-[ACP] + L-lysyl-[protein] = N(6)-octanoyl-L-lysyl-[protein] + holo-[ACP] + H(+). The protein operates within protein modification; protein lipoylation via endogenous pathway; protein N(6)-(lipoyl)lysine from octanoyl-[acyl-carrier-protein]: step 1/2. Catalyzes the transfer of endogenously produced octanoic acid from octanoyl-acyl-carrier-protein onto the lipoyl domains of lipoate-dependent enzymes. Lipoyl-ACP can also act as a substrate although octanoyl-ACP is likely to be the physiological substrate. In Bradyrhizobium sp. (strain BTAi1 / ATCC BAA-1182), this protein is Octanoyltransferase.